We begin with the raw amino-acid sequence, 693 residues long: Testis-specific Y-encoded-like protein 2 (693 aa).

Disordered regions lie at residues 1–56 (MDRP…EAAQ) and 104–125 (GYGEAPPPTESLEALPTPEASG). A Glycyl lysine isopeptide (Lys-Gly) (interchain with G-Cter in SUMO2) cross-link involves residue lysine 11. A phosphoserine mark is found at serine 18 and serine 20. Pro residues predominate over residues 23–44 (RDPPPPPPPPPLLRLPLPPPQQ). Glycyl lysine isopeptide (Lys-Gly) (interchain with G-Cter in SUMO2) cross-links involve residues lysine 163 and lysine 165. Positions 175–207 (EDEDERESMRSSRRRRRRRRRKQRKVKRESRER) are disordered. The span at 185–202 (SSRRRRRRRRRKQRKVKR) shows a compositional bias: basic residues. Threonine 340 is subject to Phosphothreonine. 2 disordered regions span residues 474–605 (ENIC…DIEY) and 627–693 (ISDE…GKTG). Polar residues predominate over residues 487 to 496 (VPNNETTDNN). Residues 509 to 519 (ESADDNNENPE) are compositionally biased toward acidic residues. Residues 531–542 (NPNNNENTYGNN) are compositionally biased toward low complexity. Composition is skewed to acidic residues over residues 559–602 (SDSD…DDRD) and 627–675 (ISDE…DLED). 3 positions are modified to phosphoserine: serine 658, serine 668, and serine 671.

This sequence belongs to the nucleosome assembly protein (NAP) family. Interacts with histones. Interacts with CASK. Part of a complex containing CASK, TBR1 and TSPYL2. In terms of processing, phosphorylation at Ser-20 and/or Thr-340 impairs function on cell proliferation. As to expression, ubiquitously expressed, with highest levels in brain, testis and heart, and lowest levels in liver and pancreas.

The protein resides in the nucleus. The protein localises to the cytoplasm. Part of the CASK/TBR1/TSPYL2 transcriptional complex which modulates gene expression in response to neuronal synaptic activity, probably by facilitating nucleosome assembly. May inhibit cell proliferation by inducing p53-dependent CDKN1A expression. The sequence is that of Testis-specific Y-encoded-like protein 2 (TSPYL2) from Homo sapiens (Human).